The sequence spans 372 residues: MKAGATSMWASCCGLLNEVMGTGAVRGQQSGFAGATGPFRFTPNPEFSTYPPAATEGPNIVCKACGLSFSVFRKKHVCCDCKKDFCSVCSVLQENLRRCSTCHLLQETAFQRPQLMRLKVKDLRQYLILRNIPTDTCREKEDLVDLVLCHHGLGSEDDMDTSSLNSSRSQTSSFFTRSFFSNYTAPSATMSSFQGELMDGDQTSRSGVPAQVQSEITSANTEDDDDDDDEDDDDEEENAEDQNPGLSKERVRASLSDLSSLDDVEGMSVRQLKEILARNFVNYSGCCEKWELVEKVNRLYKENEENQKSYGERLQLQDEEDDSLCRICMDAVIDCVLLECGHMVTCTKCGKRMSECPICRQYVVRAVHVFKS.

The segment at 56 to 107 adopts an FYVE-type zinc-finger fold; that stretch reads EGPNIVCKACGLSFSVFRKKHVCCDCKKDFCSVCSVLQENLRRCSTCHLLQE. One can recognise an SAP 1 domain in the interval 115 to 134; sequence LMRLKVKDLRQYLILRNIPT. Phosphoserine is present on Ser-169. The segment at 194–252 is disordered; the sequence is QGELMDGDQTSRSGVPAQVQSEITSANTEDDDDDDDEDDDDEEENAEDQNPGLSKERVR. Polar residues predominate over residues 201–220; sequence DQTSRSGVPAQVQSEITSAN. Positions 221–240 are enriched in acidic residues; sequence TEDDDDDDDEDDDDEEENAE. Phosphoserine occurs at positions 254 and 256. The SAP 2 domain maps to 264 to 278; sequence VEGMSVRQLKEILAR. Residues 325 to 360 form an RING-type zinc finger; that stretch reads CRICMDAVIDCVLLECGHMVTCTKCGKRMSECPICR.

As to quaternary structure, interacts with CASP8 and CASP10. Interacts with p53/TP53; involved in p53/TP53 ubiquitination. Interacts (via RING-type zinc finger) with MDM2; the interaction stabilizes MDM2. Interacts (via RING-type zinc finger) with PPARGC1A. Interacts with NOD1. Post-translationally, autoubiquitinated (in vitro). In terms of processing, proteolytically cleaved by caspases upon induction of apoptosis by TNF.

It localises to the cell membrane. The protein localises to the endomembrane system. It is found in the nucleus. Its subcellular location is the nucleus speckle. The protein resides in the cytoplasm. It localises to the cytosol. It catalyses the reaction S-ubiquitinyl-[E2 ubiquitin-conjugating enzyme]-L-cysteine + [acceptor protein]-L-lysine = [E2 ubiquitin-conjugating enzyme]-L-cysteine + N(6)-ubiquitinyl-[acceptor protein]-L-lysine.. Its pathway is protein modification; protein ubiquitination. Functionally, E3 ubiquitin-protein ligase that regulates several biological processes through the ubiquitin-mediated proteasomal degradation of various target proteins. Ubiquitinates the caspases CASP8 and CASP10, promoting their proteasomal degradation, to negatively regulate cell death downstream of death domain receptors in the extrinsic pathway of apoptosis. May mediate 'Lys-48'-linked polyubiquitination of RIPK1 and its subsequent proteasomal degradation thereby indirectly regulating the tumor necrosis factor-mediated signaling pathway. Negatively regulates p53/TP53 through its direct ubiquitination and targeting to proteasomal degradation. Indirectly, may also negatively regulate p53/TP53 through ubiquitination and degradation of SFN. Mediates PPARGC1A proteasomal degradation probably through ubiquitination thereby indirectly regulating the metabolism of brown fat cells. Possibly involved in innate immunity, through 'Lys-48'-linked polyubiquitination of NOD1 and its subsequent proteasomal degradation. The polypeptide is E3 ubiquitin-protein ligase RNF34 (RNF34) (Pongo abelii (Sumatran orangutan)).